Consider the following 77-residue polypeptide: MKAFIAILSIAIVLLLIVSIKETSAKDCKQECVKRYTNGDLTNFLKAEYGPERRGGKCYCEFTCHVKFYIYLKHELN.

The signal sequence occupies residues 1 to 25 (MKAFIAILSIAIVLLLIVSIKETSA). A propeptide spanning residues 26–46 (KDCKQECVKRYTNGDLTNFLK) is cleaved from the precursor.

It belongs to the scolopendra neurotoxin 3 family. Post-translationally, contains 2 disulfide bonds. In terms of tissue distribution, expressed by the venom gland.

The protein localises to the secreted. The sequence is that of Putative neurotoxin 3 from Scolopendra mutilans (Chinese red-headed centipede).